The sequence spans 932 residues: Receptor-like protein 9a (932 aa).

The first 28 residues, 1–28 (MLIFTIPQFFFAAWVMVVSLQMQGYISC), serve as a signal peptide directing secretion. The Extracellular segment spans residues 29–888 (IEKERKGLLE…DDETAIDMET (860 aa)). Residues N53, N80, and N90 are each glycosylated (N-linked (GlcNAc...) asparagine). LRR repeat units follow at residues 97–122 (FEEL…GYKS), 126–152 (LKKL…AASS), 154–174 (RTLI…ELKD), 175–200 (LSNL…VLHK), 202–222 (HALD…GLCQ), 223–246 (LKNL…CFSS), 247–273 (LTQL…NLDS), 275–295 (EYLS…LIAN), 296–320 (LSKL…ISLQ), 322–345 (KFRL…LQQQ), 346–368 (KDLR…WFLE), 370–393 (YPKL…RLLV), 394–417 (HSLH…IGHV), 418–441 (LPNI…SFSE), 443–466 (KKIF…FCIG), 468–491 (SSLS…PMKL), 492–514 (ESLR…LIHS), 516–535 (GLVF…PSWF), 536–560 (GGFY…TLFN), 561–583 (VSFQ…HFSF), 585–605 (HMGL…STLL), 606–629 (ENVM…VSNR), 631–652 (FLYL…LCEL), 653–676 (KSIR…LNNV), 745–769 (FKFM…LGDF), 770–792 (QRIR…SFSN), 794–817 (TDIE…LTKL), and 819–842 (YIVV…KFLS). A glycan (N-linked (GlcNAc...) asparagine) is linked at N140. N-linked (GlcNAc...) asparagine glycosylation is found at N261 and N295. N352 and N380 each carry an N-linked (GlcNAc...) asparagine glycan. 3 N-linked (GlcNAc...) asparagine glycosylation sites follow: N420, N425, and N454. 3 N-linked (GlcNAc...) asparagine glycosylation sites follow: N524, N551, and N560. N666 and N675 each carry an N-linked (GlcNAc...) asparagine glycan. N-linked (GlcNAc...) asparagine glycosylation is found at N776 and N792. N-linked (GlcNAc...) asparagine glycosylation is found at N824, N829, N860, and N866. A helical membrane pass occupies residues 889 to 909 (FYWSLFATYGITWMAFIVFLC). The Cytoplasmic segment spans residues 910–932 (FDSPWRQAWFRLVNVFVSFLKCV).

This sequence belongs to the RLP family.

It is found in the cell membrane. The protein is Receptor-like protein 9a of Arabidopsis thaliana (Mouse-ear cress).